A 525-amino-acid chain; its full sequence is GMP synthase [glutamine-hydrolyzing] (525 aa).

The Glutamine amidotransferase type-1 domain occupies 9–207 (RILILDFGSQ…VRDICQCEAL (199 aa)). Catalysis depends on Cys-86, which acts as the Nucleophile. Active-site residues include His-181 and Glu-183. Residues 208 to 400 (WTPAKIIDDA…LGLPYDMLYR (193 aa)) enclose the GMPS ATP-PPase domain. 235–241 (SGGVDSS) contributes to the ATP binding site.

Homodimer.

It catalyses the reaction XMP + L-glutamine + ATP + H2O = GMP + L-glutamate + AMP + diphosphate + 2 H(+). Its pathway is purine metabolism; GMP biosynthesis; GMP from XMP (L-Gln route): step 1/1. Catalyzes the synthesis of GMP from XMP. The protein is GMP synthase [glutamine-hydrolyzing] of Escherichia coli O139:H28 (strain E24377A / ETEC).